Consider the following 64-residue polypeptide: Small ribosomal subunit protein bS21 (64 aa).

The protein belongs to the bacterial ribosomal protein bS21 family.

This is Small ribosomal subunit protein bS21 from Oenococcus oeni (strain ATCC BAA-331 / PSU-1).